The sequence spans 171 residues: Glycine cleavage system H protein 4 (171 aa).

One can recognise a Lipoyl-binding domain in the interval 30–112 (FAEVGITDYA…YEAGWIAVIE (83 aa)). K71 bears the N6-lipoyllysine mark. A disordered region spans residues 139 to 171 (EKEEEVEVKEEELIETESIEELSEEELGYEENK).

The protein belongs to the GcvH family. In terms of assembly, the glycine cleavage system is composed of four proteins: P, T, L and H. The cofactor is (R)-lipoate.

In terms of biological role, the glycine cleavage system catalyzes the degradation of glycine. The H protein shuttles the methylamine group of glycine from the P protein to the T protein. The protein is Glycine cleavage system H protein 4 of Aquifex aeolicus (strain VF5).